The chain runs to 447 residues: Tubulin beta-1 chain (447 aa).

GTP-binding residues include Gln11, Glu69, Ser138, Gly142, Thr143, Gly144, Asn204, and Asn226. Glu69 contributes to the Mg(2+) binding site. The segment at 428-447 (ATADEDAEFDEEQEQEIEDN) is disordered. Acidic residues predominate over residues 429-447 (TADEDAEFDEEQEQEIEDN).

This sequence belongs to the tubulin family. In terms of assembly, dimer of alpha and beta chains. A typical microtubule is a hollow water-filled tube with an outer diameter of 25 nm and an inner diameter of 15 nM. Alpha-beta heterodimers associate head-to-tail to form protofilaments running lengthwise along the microtubule wall with the beta-tubulin subunit facing the microtubule plus end conferring a structural polarity. Microtubules usually have 13 protofilaments but different protofilament numbers can be found in some organisms and specialized cells. Requires Mg(2+) as cofactor.

The protein localises to the cytoplasm. It localises to the cytoskeleton. Its function is as follows. Tubulin is the major constituent of microtubules, a cylinder consisting of laterally associated linear protofilaments composed of alpha- and beta-tubulin heterodimers. Microtubules grow by the addition of GTP-tubulin dimers to the microtubule end, where a stabilizing cap forms. Below the cap, tubulin dimers are in GDP-bound state, owing to GTPase activity of alpha-tubulin. In Manduca sexta (Tobacco hawkmoth), this protein is Tubulin beta-1 chain.